A 263-amino-acid chain; its full sequence is Thymidylate kinase (263 aa).

The transit peptide at 1 to 51 directs the protein to the mitochondrion; the sequence is MKRICSVSSVQLFSRSFRALASPRSLNYPLQCIKRSSVRMESSNFSSGVRT. Residue 66–74 participates in ATP binding; sequence GLDRSGKST.

This sequence belongs to the thymidylate kinase family. Expressed in root, rosette leaves, flower buds, flowers and siliques.

It localises to the mitochondrion. The protein localises to the cytoplasm. Its subcellular location is the nucleus. The protein resides in the nucleoplasm. The catalysed reaction is dTMP + ATP = dTDP + ADP. Its pathway is pyrimidine metabolism; dTTP biosynthesis. Functionally, catalyzes the conversion of dTMP to dTDP. Involved in the regulation of DNA replication. Is essential to promote the first division of the zygote. This is Thymidylate kinase from Arabidopsis thaliana (Mouse-ear cress).